A 763-amino-acid chain; its full sequence is 5-methyltetrahydropteroyltriglutamate--homocysteine methyltransferase (763 aa).

Residues Arg-16–Lys-19 and Lys-121 each bind 5-methyltetrahydropteroyltri-L-glutamate. Residues Ile-440–Ser-442 and Glu-493 each bind L-homocysteine. Residues Ile-440–Ser-442 and Glu-493 contribute to the L-methionine site. Residues Arg-524 to Cys-525 and Trp-570 contribute to the 5-methyltetrahydropteroyltri-L-glutamate site. An L-homocysteine-binding site is contributed by Asp-608. An L-methionine-binding site is contributed by Asp-608. Residue Glu-614 coordinates 5-methyltetrahydropteroyltri-L-glutamate. Zn(2+)-binding residues include His-650, Cys-652, and Glu-674. The active-site Proton donor is His-703. Cys-735 lines the Zn(2+) pocket.

The protein belongs to the vitamin-B12 independent methionine synthase family. Zn(2+) serves as cofactor.

The enzyme catalyses 5-methyltetrahydropteroyltri-L-glutamate + L-homocysteine = tetrahydropteroyltri-L-glutamate + L-methionine. Its pathway is amino-acid biosynthesis; L-methionine biosynthesis via de novo pathway; L-methionine from L-homocysteine (MetE route): step 1/1. Functionally, catalyzes the transfer of a methyl group from 5-methyltetrahydrofolate to homocysteine resulting in methionine formation. This chain is 5-methyltetrahydropteroyltriglutamate--homocysteine methyltransferase, found in Paraburkholderia phymatum (strain DSM 17167 / CIP 108236 / LMG 21445 / STM815) (Burkholderia phymatum).